Here is a 365-residue protein sequence, read N- to C-terminus: Probable dual-specificity RNA methyltransferase RlmN (365 aa).

The Proton acceptor role is filled by Glu-108. A Radical SAM core domain is found at 114-352 (YPDRNTVCIS…SCTVRDTRGR (239 aa)). Cys-121 and Cys-358 are disulfide-bonded. Residues Cys-128, Cys-132, and Cys-135 each contribute to the [4Fe-4S] cluster site. S-adenosyl-L-methionine-binding positions include 179–180 (GE), Ser-213, 236–238 (SLH), and Asn-315. Catalysis depends on Cys-358, which acts as the S-methylcysteine intermediate.

It belongs to the radical SAM superfamily. RlmN family. It depends on [4Fe-4S] cluster as a cofactor.

It localises to the cytoplasm. The enzyme catalyses adenosine(2503) in 23S rRNA + 2 reduced [2Fe-2S]-[ferredoxin] + 2 S-adenosyl-L-methionine = 2-methyladenosine(2503) in 23S rRNA + 5'-deoxyadenosine + L-methionine + 2 oxidized [2Fe-2S]-[ferredoxin] + S-adenosyl-L-homocysteine. It carries out the reaction adenosine(37) in tRNA + 2 reduced [2Fe-2S]-[ferredoxin] + 2 S-adenosyl-L-methionine = 2-methyladenosine(37) in tRNA + 5'-deoxyadenosine + L-methionine + 2 oxidized [2Fe-2S]-[ferredoxin] + S-adenosyl-L-homocysteine. Functionally, specifically methylates position 2 of adenine 2503 in 23S rRNA and position 2 of adenine 37 in tRNAs. This Mycolicibacterium gilvum (strain PYR-GCK) (Mycobacterium gilvum (strain PYR-GCK)) protein is Probable dual-specificity RNA methyltransferase RlmN.